Here is a 321-residue protein sequence, read N- to C-terminus: Hydrolase 3 (321 aa).

The short motif at 80-82 (HGA) is the Involved in the stabilization of the negatively charged intermediate by the formation of the oxyanion hole element. Residues S172 and D267 contribute to the active site.

Belongs to the 'GDXG' lipolytic enzyme family.

It carries out the reaction dihydroprecondylocarpine acetate + NADPH = (+)-vincadifformine + acetate + NADP(+). It functions in the pathway alkaloid biosynthesis. In terms of biological role, component of the seco-iridoid and derivatives monoterpenoid indole alkaloids (MIAs, e.g. vincadifformine) biosynthesis pathway. Catalyzes the conversion of O-acetylstemmadenine (OAS) to vincadifformine. May also trigger the formation of additional unknown MIAs. The protein is Hydrolase 3 of Catharanthus roseus (Madagascar periwinkle).